We begin with the raw amino-acid sequence, 1445 residues long: Protein HUA2-LIKE 1 (1445 aa).

The PWWP domain occupies 20-77; it reads LGDLVLAKVKGFPAWPAKIGQPEDWNQAPDPKKHFVQFYGTGEIGFVTPPDIQPFTSE. Disordered stretches follow at residues 133 to 197, 211 to 302, 319 to 356, 409 to 439, 460 to 491, 641 to 685, and 797 to 835; these read KYLN…SPDP, TCTD…DLNI, FENELGKSASGADESKRAAKRPRSEDAKDQKQCKSKRL, EHTSVSSFPGSLVKEGANHPEQKISSSSDSD, DDDDEDPKTPVHGGLSNIPIASTDAPKSANAS, GIPK…TSTP, and LTPSNHGRQSSSSNQAGTEENEERRFSSGHRSVGGSLSG. Composition is skewed to polar residues over residues 173–187 and 211–225; these read QDSSISNNRNTSPSS and TCTDHSDGTGNNLVN. Composition is skewed to basic and acidic residues over residues 228 to 257, 274 to 293, and 331 to 350; these read RIIRKTTDDSNKRCKDEVRAKRVPDSRAAT, GQDHGSKKGQDHGCRKESSD, and DESKRAAKRPRSEDAKDQKQ. Composition is skewed to polar residues over residues 660–673 and 797–814; these read RVSSSHSQTANQRS and LTPSNHGRQSSSSNQAGT. Residues 838-979 form the CID domain; that stretch reads EAAISRDTFE…RYIGDLGASG (142 aa). The segment at 1110–1203 is disordered; the sequence is PATTCATELP…SLPLQPGFAP (94 aa). The span at 1124–1170 shows a compositional bias: pro residues; it reads GSPPLPHESPPSPPPQPPSSPPPPSSPPQLAPAPPPSDHCLPPPTAP.

As to expression, expressed throughout young primordia, and vegetative and reproductive apices.

The protein localises to the nucleus. In terms of biological role, probable transcription factor that acts with partial redundancy with HULK2 and HULK3. Plays diverse and essential roles in the control of plant development, physiology and flowering time. This Arabidopsis thaliana (Mouse-ear cress) protein is Protein HUA2-LIKE 1.